Reading from the N-terminus, the 776-residue chain is Mitochondrial intermediate peptidase (776 aa).

The transit peptide at methionine 1–leucine 38 directs the protein to the mitochondrion. Histidine 560 lines the Zn(2+) pocket. Residue glutamate 561 is part of the active site. Positions 564 and 567 each coordinate Zn(2+).

It belongs to the peptidase M3 family. The cofactor is Zn(2+).

Its subcellular location is the mitochondrion matrix. The catalysed reaction is Release of an N-terminal octapeptide as second stage of processing of some proteins imported into the mitochondrion.. Cleaves proteins, imported into the mitochondrion, to their mature size. While most mitochondrial precursor proteins are processed to the mature form in one step by mitochondrial processing peptidase (MPP), the sequential cleavage by MIP of an octapeptide after initial processing by MPP is a required step for a subgroup of nuclear-encoded precursor proteins destined for the matrix or the inner membrane. The polypeptide is Mitochondrial intermediate peptidase (OCT1) (Coprinopsis cinerea (strain Okayama-7 / 130 / ATCC MYA-4618 / FGSC 9003) (Inky cap fungus)).